We begin with the raw amino-acid sequence, 309 residues long: Protein FdhE (309 aa).

The protein belongs to the FdhE family.

It localises to the cytoplasm. Its function is as follows. Necessary for formate dehydrogenase activity. The chain is Protein FdhE from Escherichia coli O139:H28 (strain E24377A / ETEC).